The sequence spans 296 residues: Probable endonuclease 4 (296 aa).

His-68, His-109, Glu-144, Asp-178, His-181, His-213, Asp-226, His-228, and Glu-258 together coordinate Zn(2+).

This sequence belongs to the AP endonuclease 2 family. Zn(2+) is required as a cofactor.

The enzyme catalyses Endonucleolytic cleavage to 5'-phosphooligonucleotide end-products.. Its function is as follows. Endonuclease IV plays a role in DNA repair. It cleaves phosphodiester bonds at apurinic or apyrimidinic (AP) sites, generating a 3'-hydroxyl group and a 5'-terminal sugar phosphate. In Staphylococcus aureus (strain MRSA252), this protein is Probable endonuclease 4.